The chain runs to 467 residues: MVAVRASRRKRASATDLYKTCKAAGTCPPDVIPKIEGSTLADKILQWSGLGIFLGGLGIGTGTGTGGRTGYIPLGGGGRPSVVDIGPTRPPIIIEPVGPTEPSIVTLVEESSIIQSGSPFPNFSGGDGFEVTTSSTTTPAVLDITPSPGTVHVTSTNIQNPLYIEPPVDIPQSGEALGHIFTSTSTAGTHSYEEIPMEVFASNTSSGSKPISSTPIPGIRRVAAPRLYSKAYQQVKVTDPNFISKPSTFITFDNPAYEPMDTTLTFSADSHVAPDPDFLDIIALHRPALTSRRGTVRFSRLGQKATLKTRSGKQIGAKVHYYHDISPIHATEEAIELQPLITSEQHSTPLFDVYADADPAPTFTFPSTTPTTIPRFSSTIFSTTSSAPLNVTIPLSTSFDIPIYNGPDIYAPVPSSTWPYIPPPPTTMSHSVVAQGGNYYLWPYIYLIHKRRRKRVPCFFSDGLAAY.

The short motif at 1–12 (MVAVRASRRKRA) is the Nuclear localization signal element. A disulfide bond links Cys21 and Cys27. The short motif at 447–456 (LIHKRRRKRV) is the Nuclear localization signal element.

The protein belongs to the papillomaviridae L2 protein family. As to quaternary structure, interacts with major capsid protein L1. Interacts with E2; this interaction inhibits E2 transcriptional activity but not the DNA replication function E2. Interacts with host GADD45GIP1. Interacts with host HSPA8; this interaction is required for L2 nuclear translocation. Interacts with host importins KPNB2 and KPNB3. Forms a complex with importin alpha2-beta1 heterodimers via interaction with the importin alpha2 adapter. Interacts with host DYNLT1; this interaction is essential for virus intracellular transport during entry. Interacts (via C-terminus) with host retromer subunits VPS35 and VPS29. Post-translationally, highly phosphorylated.

Its subcellular location is the virion. The protein localises to the host nucleus. It is found in the host early endosome. The protein resides in the host Golgi apparatus. Its function is as follows. Minor protein of the capsid that localizes along the inner surface of the virion, within the central cavities beneath the L1 pentamers. Plays a role in capsid stabilization through interaction with the major capsid protein L1. Once the virion enters the host cell, L2 escorts the genomic DNA into the nucleus by promoting escape from the endosomal compartments and traffic through the host Golgi network. Mechanistically, the C-terminus of L2 possesses a cell-penetrating peptide that protudes from the host endosome, interacts with host cytoplasmic retromer cargo and thereby mediates the capsid delivery to the host trans-Golgi network. Plays a role through its interaction with host dynein in the intracellular microtubule-dependent transport of viral capsid toward the nucleus. Mediates the viral genome import into the nucleus through binding to host importins. Once within the nucleus, L2 localizes viral genomes to host PML bodies in order to activate early gene expression for establishment of infection. Later on, promotes late gene expression by interacting with the viral E2 protein and by inhibiting its transcriptional activation functions. During virion assembly, encapsidates the genome by direct interaction with the viral DNA. The chain is Minor capsid protein L2 from Human papillomavirus 69.